We begin with the raw amino-acid sequence, 206 residues long: Large ribosomal subunit protein uL4 (206 aa).

The disordered stretch occupies residues lysine 44 to glycine 87. Positions glycine 60–glycine 71 are enriched in basic residues.

It belongs to the universal ribosomal protein uL4 family. As to quaternary structure, part of the 50S ribosomal subunit.

Its function is as follows. One of the primary rRNA binding proteins, this protein initially binds near the 5'-end of the 23S rRNA. It is important during the early stages of 50S assembly. It makes multiple contacts with different domains of the 23S rRNA in the assembled 50S subunit and ribosome. In terms of biological role, forms part of the polypeptide exit tunnel. In Agathobacter rectalis (strain ATCC 33656 / DSM 3377 / JCM 17463 / KCTC 5835 / VPI 0990) (Eubacterium rectale), this protein is Large ribosomal subunit protein uL4.